Reading from the N-terminus, the 312-residue chain is Putative ring-cleaving dioxygenase MhqO (312 aa).

VOC domains lie at 7–131 (GIHH…IVER) and 152–269 (GFGG…IATD). The Fe cation site is built by His10, His217, and Glu265.

This sequence belongs to the extradiol ring-cleavage dioxygenase family. Fe(2+) serves as cofactor.

The protein localises to the cytoplasm. Putative ring-cleavage dioxygenase that may contribute to the degradation of aromatic compounds. The polypeptide is Putative ring-cleaving dioxygenase MhqO (mhqO) (Bacillus subtilis (strain 168)).